Here is a 246-residue protein sequence, read N- to C-terminus: Polyhedrin (246 aa).

It belongs to the polyhedrin family.

In terms of biological role, major component of the virus occlusion bodies, which are large proteinaceous structures (polyhedra), that protect the virus from the outside environment for extended periods until they are ingested by insect larvae. The chain is Polyhedrin (PH) from Mamestra brassicae nuclear polyhedrosis virus (MbNPV).